The following is a 68-amino-acid chain: Putative transcript Y 10 protein (68 aa).

The polypeptide is Putative transcript Y 10 protein (TTTY10) (Homo sapiens (Human)).